Consider the following 257-residue polypeptide: Aspartate/glutamate leucyltransferase (257 aa).

Belongs to the R-transferase family. Bpt subfamily.

Its subcellular location is the cytoplasm. The enzyme catalyses N-terminal L-glutamyl-[protein] + L-leucyl-tRNA(Leu) = N-terminal L-leucyl-L-glutamyl-[protein] + tRNA(Leu) + H(+). It carries out the reaction N-terminal L-aspartyl-[protein] + L-leucyl-tRNA(Leu) = N-terminal L-leucyl-L-aspartyl-[protein] + tRNA(Leu) + H(+). Functions in the N-end rule pathway of protein degradation where it conjugates Leu from its aminoacyl-tRNA to the N-termini of proteins containing an N-terminal aspartate or glutamate. The chain is Aspartate/glutamate leucyltransferase from Phenylobacterium zucineum (strain HLK1).